Consider the following 428-residue polypeptide: Glutamyl-tRNA reductase (428 aa).

Substrate is bound by residues 49 to 52 (TCNR), Ser-107, 112 to 114 (EPQ), and Gln-118. Cys-50 functions as the Nucleophile in the catalytic mechanism. 187 to 192 (GAGETI) is a binding site for NADP(+).

The protein belongs to the glutamyl-tRNA reductase family. In terms of assembly, homodimer.

The enzyme catalyses (S)-4-amino-5-oxopentanoate + tRNA(Glu) + NADP(+) = L-glutamyl-tRNA(Glu) + NADPH + H(+). Its pathway is porphyrin-containing compound metabolism; protoporphyrin-IX biosynthesis; 5-aminolevulinate from L-glutamyl-tRNA(Glu): step 1/2. Catalyzes the NADPH-dependent reduction of glutamyl-tRNA(Glu) to glutamate 1-semialdehyde (GSA). The protein is Glutamyl-tRNA reductase of Pseudomonas fluorescens (strain Pf0-1).